We begin with the raw amino-acid sequence, 348 residues long: Nitrogenase vanadium-iron protein beta chain (348 aa).

The [8Fe-7S] cluster site is built by C31, C56, C115, and S153.

This sequence belongs to the NifD/NifK/NifE/NifN family. Hexamer of two alpha, two beta, and two delta chains. The cofactor is [8Fe-7S] cluster.

It carries out the reaction N2 + 8 reduced [2Fe-2S]-[ferredoxin] + 16 ATP + 16 H2O = H2 + 8 oxidized [2Fe-2S]-[ferredoxin] + 2 NH4(+) + 16 ADP + 16 phosphate + 6 H(+). Functionally, this vanadium-iron protein is part of the nitrogenase complex that catalyzes the key enzymatic reactions in nitrogen fixation. This chain is Nitrogenase vanadium-iron protein beta chain (vnfK), found in Azorhizophilus paspali (Azotobacter paspali).